We begin with the raw amino-acid sequence, 811 residues long: Probable inorganic carbon transporter subunit DabA (811 aa).

4 residues coordinate Zn(2+): Cys336, Asp338, His498, and Cys513.

This sequence belongs to the inorganic carbon transporter (TC 9.A.2) DabA family. Forms a complex with DabB. Zn(2+) serves as cofactor.

It localises to the cell inner membrane. In terms of biological role, part of an energy-coupled inorganic carbon pump. The sequence is that of Probable inorganic carbon transporter subunit DabA from Rhodospirillum centenum (strain ATCC 51521 / SW).